The chain runs to 120 residues: Chaperonin GroEL (120 aa).

23-27 (DGTTT) serves as a coordination point for ATP.

This sequence belongs to the chaperonin (HSP60) family. Forms a cylinder of 14 subunits composed of two heptameric rings stacked back-to-back. Interacts with the co-chaperonin GroES.

Its subcellular location is the cytoplasm. The catalysed reaction is ATP + H2O + a folded polypeptide = ADP + phosphate + an unfolded polypeptide.. Together with its co-chaperonin GroES, plays an essential role in assisting protein folding. The GroEL-GroES system forms a nano-cage that allows encapsulation of the non-native substrate proteins and provides a physical environment optimized to promote and accelerate protein folding. The sequence is that of Chaperonin GroEL from Mycolicibacterium pulveris (Mycobacterium pulveris).